The sequence spans 1025 residues: Multidrug resistance protein MdtC (1025 aa).

Transmembrane regions (helical) follow at residues 16–36 (LLTL…PVAP), 333–353 (EVEQ…FVFL), 360–380 (LIPA…MYLC), 387–407 (LSLM…IVVL), 431–451 (VGFT…PLLM), 459–479 (FFAE…FVSV), 528–548 (WVLL…ISIP), 853–873 (LWLM…LYES), 875–895 (VHPL…LLAL), 897–917 (LFDT…IGIV), 953–973 (PILM…LTSG), and 984–1004 (ITIA…TPVV).

Belongs to the resistance-nodulation-cell division (RND) (TC 2.A.6) family. MdtC subfamily. As to quaternary structure, part of a tripartite efflux system composed of MdtA, MdtB and MdtC. MdtC forms a heteromultimer with MdtB.

It localises to the cell inner membrane. The protein is Multidrug resistance protein MdtC of Pantoea ananatis (strain AJ13355).